Reading from the N-terminus, the 288-residue chain is Aquaporin PIP 1-3 (288 aa).

The segment at 1 to 30 (MEGKEEDVRLGANRYTERQPIGTAAQGAEE) is disordered. 2 helical membrane-spanning segments follow: residues 57–77 (IAEF…VMGV) and 92–114 (IAWS…SGGH). Positions 116–118 (NPA) match the NPA 1 motif. A run of 3 helical transmembrane segments spans residues 135 to 155 (VFYM…VKGF), 177 to 197 (GDGL…VFSA), and 211 to 231 (ILAP…TIPI). Positions 237 to 239 (NPA) match the NPA 2 motif. A helical membrane pass occupies residues 259 to 279 (IFWVGPFIGAALAAIYHVVVI).

This sequence belongs to the MIP/aquaporin (TC 1.A.8) family. PIP (TC 1.A.8.11) subfamily. Expressed in roots and leaves.

Its subcellular location is the cell membrane. Water channel required to facilitate the transport of water across cell membrane. Increases the capacity for root water uptake under water deficit. May play a role in drought avoidance in upland rice. The polypeptide is Aquaporin PIP 1-3 (PIP1-3) (Oryza sativa subsp. japonica (Rice)).